Consider the following 619-residue polypeptide: Sodium-dependent dopamine transporter (619 aa).

Over 1 to 56 (MSKSKCSVGPMSSVVAPAKESNAVGPREVELILVKEQNGVQLTNSTLINPPQTPVE) the chain is Cytoplasmic. A discontinuously helical transmembrane segment spans residues 57–95 (AQERETWSKKIDFLLSVIGFAVDLANVWRFPYLCYKNGG). The Na(+) site is built by G75, A77, V78, D79, and N82. Residue D79 participates in dopamine binding. A run of 2 helical transmembrane segments spans residues 96-127 (GAFL…NREG) and 128-171 (AAGV…FSSF). The dopamine site is built by S149 and G153. The Extracellular segment spans residues 172-235 (TMDLPWIHCN…SRGIDDLGPP (64 aa)). Cysteines 180 and 189 form a disulfide. N-linked (GlcNAc...) asparagine glycans are attached at residues N181, N188, N196, and N204. 2 helical membrane passes run 236–255 (RWQL…FSLW) and 256–286 (KGVK…GVTL). Residues 287-305 (PGAMDGIRAYLSVDFYRLC) lie on the Extracellular side of the membrane. The discontinuously helical transmembrane segment at 306–334 (EASVWIDAATQVCFSLGVGFGVLIAFSSY) threads the bilayer. Q316 contacts chloride. F319 is a dopamine binding site. Positions 320 and 352 each coordinate Na(+). Position 320 (S320) interacts with chloride. The helical transmembrane segment at 335–375 (NKFTNNCYRDAIITTSINSLTSFSSGFVVFSFLGYMAQKHN) threads the bilayer. S356 is a chloride binding site. The Extracellular portion of the chain corresponds to 376 to 399 (VPIRDVATDGPGLIFIIYPEAIAT). A run of 3 helical transmembrane segments spans residues 400–441 (LPLS…QLLH), 442–465 (RHRE…CVTN), and 466–498 (GGIY…AWFY). Residues L417, D420, and S421 each contribute to the Na(+) site. The dopamine site is built by S421 and A422. The Cytoplasmic segment spans residues 499–515 (GVQQFSDDIKQMTGQRP). A helical transmembrane segment spans residues 516–541 (NLYWRLCWKLVSPCFLLYVVVVSIVT). Topologically, residues 542-552 (FRPPHYGAYIF) are extracellular. A helical transmembrane segment spans residues 553–582 (PDWANALGWIIATSSMAMVPIYATYKFCSL). The interval 560–589 (GWIIATSSMAMVPIYATYKFCSLPGSFREK) is interaction with TGFB1I1. The Cytoplasmic segment spans residues 583–619 (PGSFREKLAYAITPEKDHQLVDRGEVRQFTLRHWLLL).

It belongs to the sodium:neurotransmitter symporter (SNF) (TC 2.A.22) family. SLC6A3 subfamily. Monomer. Homooligomer; disulfide-linked. Interacts with PRKCABP and TGFB1I1. Interacts (via N-terminus) with SYNGR3 (via N-terminus). Interacts with SLC18A2. Interacts with TOR1A (ATP-bound); TOR1A regulates SLC6A3 subcellular location. Interacts with alpha-synuclein/SNCA. Interacts with SEPTIN4. In terms of tissue distribution, brain. Expressed in the substantia nigra and ventral tegmental area, regions that contain dopaminergic cell bodies.

It is found in the cell membrane. The protein resides in the cell projection. It localises to the neuron projection. Its subcellular location is the axon. The enzyme catalyses dopamine(out) + chloride(out) + Na(+)(out) = dopamine(in) + chloride(in) + Na(+)(in). It catalyses the reaction (R)-noradrenaline(out) + chloride(out) + Na(+)(out) = (R)-noradrenaline(in) + chloride(in) + Na(+)(in). The catalysed reaction is dopamine(out) + chloride(out) + 2 Na(+)(out) = dopamine(in) + chloride(in) + 2 Na(+)(in). Inhibited by mazindol, cocaine, desipramine, GBR 12783 dihydrochloride, GBR 12909 dihydrochloride and nomifensine. Inhibited by zinc ions. Mediates sodium- and chloride-dependent transport of dopamine. Also mediates sodium- and chloride-dependent transport of norepinephrine (also known as noradrenaline). Regulator of light-dependent retinal hyaloid vessel regression, downstream of OPN5 signaling. This Rattus norvegicus (Rat) protein is Sodium-dependent dopamine transporter (Slc6a3).